The sequence spans 81 residues: Exodeoxyribonuclease 7 small subunit (81 aa).

The segment at 59-81 (KLVDKDGNEKTLDPQNASAPEEE) is disordered. The span at 60–70 (LVDKDGNEKTL) shows a compositional bias: basic and acidic residues. A compositionally biased stretch (polar residues) spans 71–81 (DPQNASAPEEE).

This sequence belongs to the XseB family. In terms of assembly, heterooligomer composed of large and small subunits.

Its subcellular location is the cytoplasm. The catalysed reaction is Exonucleolytic cleavage in either 5'- to 3'- or 3'- to 5'-direction to yield nucleoside 5'-phosphates.. Functionally, bidirectionally degrades single-stranded DNA into large acid-insoluble oligonucleotides, which are then degraded further into small acid-soluble oligonucleotides. The protein is Exodeoxyribonuclease 7 small subunit of Lactobacillus gasseri (strain ATCC 33323 / DSM 20243 / BCRC 14619 / CIP 102991 / JCM 1131 / KCTC 3163 / NCIMB 11718 / NCTC 13722 / AM63).